The following is a 436-amino-acid chain: Chromosomal replication initiator protein DnaA (436 aa).

The domain I, interacts with DnaA modulators stretch occupies residues 1–80 (MSHEAVWQHV…QAPRFELRVV (80 aa)). Residues 80-100 (VPGVVVQEDIFQAAPAEAPRP) form a domain II region. The domain III, AAA+ region stretch occupies residues 101–317 (KLNPKYTFEN…GALMRAIAFA (217 aa)). ATP is bound by residues Gly145, Gly147, Lys148, and Thr149. The interval 318–436 (SLNGVELTRA…LLRTLREACT (119 aa)) is domain IV, binds dsDNA.

Belongs to the DnaA family. As to quaternary structure, oligomerizes as a right-handed, spiral filament on DNA at oriC.

The protein localises to the cytoplasm. Plays an essential role in the initiation and regulation of chromosomal replication. ATP-DnaA binds to the origin of replication (oriC) to initiate formation of the DNA replication initiation complex once per cell cycle. Binds the DnaA box (a 9 base pair repeat at the origin) and separates the double-stranded (ds)DNA. Forms a right-handed helical filament on oriC DNA; dsDNA binds to the exterior of the filament while single-stranded (ss)DNA is stabiized in the filament's interior. The ATP-DnaA-oriC complex binds and stabilizes one strand of the AT-rich DNA unwinding element (DUE), permitting loading of DNA polymerase. After initiation quickly degrades to an ADP-DnaA complex that is not apt for DNA replication. Binds acidic phospholipids. The chain is Chromosomal replication initiator protein DnaA from Thermus thermophilus (strain ATCC BAA-163 / DSM 7039 / HB27).